The chain runs to 61 residues: Probable tautomerase lmo2564 (61 aa).

The active-site Proton acceptor; via imino nitrogen is the Pro-2.

It belongs to the 4-oxalocrotonate tautomerase family.

This Listeria monocytogenes serovar 1/2a (strain ATCC BAA-679 / EGD-e) protein is Probable tautomerase lmo2564.